The chain runs to 887 residues: Alanine--tRNA ligase (887 aa).

Residues H579, H583, C681, and H685 each coordinate Zn(2+).

It belongs to the class-II aminoacyl-tRNA synthetase family. Requires Zn(2+) as cofactor.

The protein resides in the cytoplasm. The enzyme catalyses tRNA(Ala) + L-alanine + ATP = L-alanyl-tRNA(Ala) + AMP + diphosphate. In terms of biological role, catalyzes the attachment of alanine to tRNA(Ala) in a two-step reaction: alanine is first activated by ATP to form Ala-AMP and then transferred to the acceptor end of tRNA(Ala). Also edits incorrectly charged Ser-tRNA(Ala) and Gly-tRNA(Ala) via its editing domain. The sequence is that of Alanine--tRNA ligase from Flavobacterium psychrophilum (strain ATCC 49511 / DSM 21280 / CIP 103535 / JIP02/86).